A 227-amino-acid chain; its full sequence is Homeobox protein HD-10 (227 aa).

The homeobox DNA-binding region spans 30-89 (FVKHRKRTTKAQLKVLEETFETNIRPDANMRKKLGEQLGMTPRSVQVWFQNRRAKIKKLT). The disordered stretch occupies residues 88–115 (LTQKKMMQQENTDNTKGPDAAHGSSSPK). The segment covering 92 to 102 (KMMQQENTDNT) has biased composition (polar residues).

It is found in the nucleus. The polypeptide is Homeobox protein HD-10 (HD-10) (Encephalitozoon cuniculi (strain GB-M1) (Microsporidian parasite)).